The following is a 97-amino-acid chain: Large ribosomal subunit protein eL21 (97 aa).

Residues 1 to 23 (MTKMSKGPRSGSRRVMTKSVKNK) form a disordered region.

This sequence belongs to the eukaryotic ribosomal protein eL21 family.

The polypeptide is Large ribosomal subunit protein eL21 (Picrophilus torridus (strain ATCC 700027 / DSM 9790 / JCM 10055 / NBRC 100828 / KAW 2/3)).